A 742-amino-acid chain; its full sequence is Collectin-12 (742 aa).

Residues Met1 to Lys37 are Cytoplasmic-facing. A helical; Signal-anchor for type II membrane protein transmembrane segment spans residues Phe38 to Gly58. Residues Tyr59–Val742 are Extracellular-facing. Coiled coils occupy residues Gly71 to Ala101 and Asn271 to Glu334. Residues Thr439–Asn605 form a disordered region. 2 consecutive Collagen-like domains span residues Gly467 to Pro526 and Gly527 to Pro586. Positions Pro475–Pro492 are enriched in pro residues. 2 stretches are compositionally biased toward low complexity: residues Arg502–Pro522 and Gln532–Pro556. Residues Pro571–Gly589 are compositionally biased toward pro residues. 3 disulfides stabilise this stretch: Cys607–Cys618, Cys635–Cys730, and Cys708–Cys722. The 118-residue stretch at Tyr614–Glu731 folds into the C-type lectin domain. Ca(2+) is bound by residues Ile644, Asn646, Glu650, Asp670, and Glu674. Lys691, Gln694, and Asp696 together coordinate a carbohydrate. Positions 694, 696, 697, 706, 707, 718, 719, and 731 each coordinate Ca(2+). Position 706 (Glu706) interacts with a carbohydrate. Residues Asn718 and Asp719 each coordinate a carbohydrate.

Widely expressed.

It is found in the membrane. In terms of biological role, scavenger receptor that displays several functions associated with host defense. Binds to carbohydrates. This chain is Collectin-12 (COLEC12), found in Gallus gallus (Chicken).